The sequence spans 384 residues: Probable RNA 3'-terminal phosphate cyclase-like protein (384 aa).

It belongs to the RNA 3'-terminal cyclase family. Type 2 subfamily. In terms of assembly, part of the small subunit (SSU) processome, composed of more than 70 proteins and the RNA chaperone small nucleolar RNA (snoRNA) U3.

The protein localises to the nucleus. It localises to the nucleolus. In terms of biological role, part of the small subunit (SSU) processome, first precursor of the small eukaryotic ribosomal subunit. During the assembly of the SSU processome in the nucleolus, many ribosome biogenesis factors, an RNA chaperone and ribosomal proteins associate with the nascent pre-rRNA and work in concert to generate RNA folding, modifications, rearrangements and cleavage as well as targeted degradation of pre-ribosomal RNA by the RNA exosome. Does not have cyclase activity. The protein is Probable RNA 3'-terminal phosphate cyclase-like protein (Rtc1) of Drosophila melanogaster (Fruit fly).